A 234-amino-acid chain; its full sequence is Large ribosomal subunit protein uL1 (234 aa).

This sequence belongs to the universal ribosomal protein uL1 family. Part of the 50S ribosomal subunit.

Its function is as follows. Binds directly to 23S rRNA. The L1 stalk is quite mobile in the ribosome, and is involved in E site tRNA release. In terms of biological role, protein L1 is also a translational repressor protein, it controls the translation of the L11 operon by binding to its mRNA. The protein is Large ribosomal subunit protein uL1 of Prochlorococcus marinus (strain SARG / CCMP1375 / SS120).